The sequence spans 196 residues: Deoxyribose-phosphate aldolase (196 aa).

Asp91 functions as the Proton donor/acceptor in the catalytic mechanism. The active-site Schiff-base intermediate with acetaldehyde is the Lys153. The active-site Proton donor/acceptor is the Lys182.

It belongs to the DeoC/FbaB aldolase family. DeoC type 1 subfamily.

Its subcellular location is the cytoplasm. It catalyses the reaction 2-deoxy-D-ribose 5-phosphate = D-glyceraldehyde 3-phosphate + acetaldehyde. It functions in the pathway carbohydrate degradation; 2-deoxy-D-ribose 1-phosphate degradation; D-glyceraldehyde 3-phosphate and acetaldehyde from 2-deoxy-alpha-D-ribose 1-phosphate: step 2/2. Functionally, catalyzes a reversible aldol reaction between acetaldehyde and D-glyceraldehyde 3-phosphate to generate 2-deoxy-D-ribose 5-phosphate. This is Deoxyribose-phosphate aldolase from Mycoplasma mycoides subsp. mycoides SC (strain CCUG 32753 / NCTC 10114 / PG1).